The primary structure comprises 76 residues: Large ribosomal subunit protein bL31 (76 aa).

Cysteine 16, cysteine 18, cysteine 37, and cysteine 40 together coordinate Zn(2+).

Belongs to the bacterial ribosomal protein bL31 family. Type A subfamily. In terms of assembly, part of the 50S ribosomal subunit. It depends on Zn(2+) as a cofactor.

Functionally, binds the 23S rRNA. The chain is Large ribosomal subunit protein bL31 from Maridesulfovibrio salexigens (strain ATCC 14822 / DSM 2638 / NCIMB 8403 / VKM B-1763) (Desulfovibrio salexigens).